Consider the following 251-residue polypeptide: Phosphate import ATP-binding protein PstB (251 aa).

Residues 5–246 (FDIRNFSVYY…PEKELTEKYL (242 aa)) form the ABC transporter domain. 37 to 44 (GPSGCGKS) is a binding site for ATP.

Belongs to the ABC transporter superfamily. Phosphate importer (TC 3.A.1.7) family. As to quaternary structure, the complex is composed of two ATP-binding proteins (PstB), two transmembrane proteins (PstC and PstA) and a solute-binding protein (PstS).

It localises to the cell membrane. The catalysed reaction is phosphate(out) + ATP + H2O = ADP + 2 phosphate(in) + H(+). Its function is as follows. Part of the ABC transporter complex PstSACB involved in phosphate import. Responsible for energy coupling to the transport system. This chain is Phosphate import ATP-binding protein PstB, found in Archaeoglobus fulgidus (strain ATCC 49558 / DSM 4304 / JCM 9628 / NBRC 100126 / VC-16).